Consider the following 70-residue polypeptide: U2-agatoxin-Ao1n (70 aa).

The signal sequence occupies residues methionine 1–alanine 20. The propeptide occupies valine 21–arginine 34. Intrachain disulfides connect cysteine 37-cysteine 53, cysteine 44-cysteine 58, and cysteine 52-cysteine 68. Leucine 69 is subject to Leucine amide.

Belongs to the neurotoxin 01 (U2-agtx) family. As to expression, expressed by the venom gland.

The protein localises to the secreted. In terms of biological role, insect active toxin causing rapid but reversible paralysis in crickets. No activity shown in mammals. Does not show effect on mammalian voltage-gated calcium channels. The protein is U2-agatoxin-Ao1n of Agelena orientalis (Funnel-web spider).